The following is a 184-amino-acid chain: Jacalin-related lectin 2 (184 aa).

The 160-residue stretch at 4 to 163 (KIKIGPVGTD…LQNIGVYLQP (160 aa)) folds into the Jacalin-type lectin domain.

The protein belongs to the jacalin lectin family.

This is Jacalin-related lectin 2 (JAL2) from Arabidopsis thaliana (Mouse-ear cress).